A 368-amino-acid polypeptide reads, in one-letter code: Chaperone protein DnaJ (368 aa).

Positions 5 to 70 (DYYQVLGVPR…KKRKLYDTHG (66 aa)) constitute a J domain. The segment at 124 to 201 (GVERQIQIPT…CNGAGRVEDH (78 aa)) adopts a CR-type zinc-finger fold. Positions 137, 140, 153, 156, 175, 178, 189, and 192 each coordinate Zn(2+). CXXCXGXG motif repeat units lie at residues 137 to 144 (CTHCNGSG), 153 to 160 (CGTCRGSG), 175 to 182 (CPHCGGRG), and 189 to 196 (CKVCNGAG).

It belongs to the DnaJ family. In terms of assembly, homodimer. The cofactor is Zn(2+).

The protein resides in the cytoplasm. Its function is as follows. Participates actively in the response to hyperosmotic and heat shock by preventing the aggregation of stress-denatured proteins and by disaggregating proteins, also in an autonomous, DnaK-independent fashion. Unfolded proteins bind initially to DnaJ; upon interaction with the DnaJ-bound protein, DnaK hydrolyzes its bound ATP, resulting in the formation of a stable complex. GrpE releases ADP from DnaK; ATP binding to DnaK triggers the release of the substrate protein, thus completing the reaction cycle. Several rounds of ATP-dependent interactions between DnaJ, DnaK and GrpE are required for fully efficient folding. Also involved, together with DnaK and GrpE, in the DNA replication of plasmids through activation of initiation proteins. The sequence is that of Chaperone protein DnaJ from Xylella fastidiosa (strain M12).